Consider the following 489-residue polypeptide: Oxysterol-binding protein-related protein 1B (489 aa).

It belongs to the OSBP family. In terms of tissue distribution, expressed at low levels in flowers.

Functionally, may be involved in the transport of sterols. The protein is Oxysterol-binding protein-related protein 1B (ORP1B) of Arabidopsis thaliana (Mouse-ear cress).